We begin with the raw amino-acid sequence, 434 residues long: Serine--tRNA ligase (434 aa).

Position 239–241 (239–241) interacts with L-serine; it reads TAE. 270–272 is an ATP binding site; it reads RSE. Glutamate 293 lines the L-serine pocket. Residue 357–360 participates in ATP binding; the sequence is EISS. Residue serine 393 participates in L-serine binding.

This sequence belongs to the class-II aminoacyl-tRNA synthetase family. Type-1 seryl-tRNA synthetase subfamily. As to quaternary structure, homodimer. The tRNA molecule binds across the dimer.

It is found in the cytoplasm. The catalysed reaction is tRNA(Ser) + L-serine + ATP = L-seryl-tRNA(Ser) + AMP + diphosphate + H(+). It carries out the reaction tRNA(Sec) + L-serine + ATP = L-seryl-tRNA(Sec) + AMP + diphosphate + H(+). Its pathway is aminoacyl-tRNA biosynthesis; selenocysteinyl-tRNA(Sec) biosynthesis; L-seryl-tRNA(Sec) from L-serine and tRNA(Sec): step 1/1. Functionally, catalyzes the attachment of serine to tRNA(Ser). Is also able to aminoacylate tRNA(Sec) with serine, to form the misacylated tRNA L-seryl-tRNA(Sec), which will be further converted into selenocysteinyl-tRNA(Sec). The chain is Serine--tRNA ligase from Pseudoalteromonas translucida (strain TAC 125).